The following is a 555-amino-acid chain: Membrane protein insertase YidC (555 aa).

The helical transmembrane segment at 7-24 (ILWVIFSMSLVLLYDNWQ) threads the bilayer. Positions 61 to 81 (TAGAAAPAAPGGAPQAAAQPT) are disordered. 5 helical membrane passes run 341–361 (GWLT…HGFL), 364–384 (WGWS…PLSA), 430–450 (LGGC…YWVL), 468–488 (LSVP…MFVQ), and 503–523 (VMMI…AGLV).

Belongs to the OXA1/ALB3/YidC family. Type 1 subfamily. In terms of assembly, interacts with the Sec translocase complex via SecD. Specifically interacts with transmembrane segments of nascent integral membrane proteins during membrane integration.

The protein resides in the cell inner membrane. Functionally, required for the insertion and/or proper folding and/or complex formation of integral membrane proteins into the membrane. Involved in integration of membrane proteins that insert both dependently and independently of the Sec translocase complex, as well as at least some lipoproteins. Aids folding of multispanning membrane proteins. In Cupriavidus pinatubonensis (strain JMP 134 / LMG 1197) (Cupriavidus necator (strain JMP 134)), this protein is Membrane protein insertase YidC.